A 229-amino-acid chain; its full sequence is uncharacterized protein (229 aa).

The tract at residues 1 to 41 (MRSAKVGVARQLETKKPQTGRKISTSSRGTIHSQQSQPEDI) is disordered. The span at 21–39 (RKISTSSRGTIHSQQSQPE) shows a compositional bias: polar residues. EF-hand domains follow at residues 48–83 (KELK…IGLH), 84–119 (ANKA…SQNI), 123–158 (TNEE…FGDF), and 159–193 (DDEL…YLLN). Asp-61, Asp-63, Ser-65, Glu-72, Asp-97, Asp-99, Asn-101, Glu-103, Glu-108, Asp-136, Asp-138, Asn-140, and Glu-147 together coordinate Ca(2+). Residues 194 to 217 (DPKHDIDTGDSDVERYDDRHDDRA) are compositionally biased toward basic and acidic residues. A disordered region spans residues 194 to 229 (DPKHDIDTGDSDVERYDDRHDDRASPMPNHLSTVPE).

This is an uncharacterized protein from Caenorhabditis elegans.